Here is a 498-residue protein sequence, read N- to C-terminus: Glutamyl-tRNA(Gln) amidotransferase subunit A (498 aa).

Residues Lys79 and Ser154 each act as charge relay system in the active site. Ser178 acts as the Acyl-ester intermediate in catalysis.

It belongs to the amidase family. GatA subfamily. In terms of assembly, heterotrimer of A, B and C subunits.

The catalysed reaction is L-glutamyl-tRNA(Gln) + L-glutamine + ATP + H2O = L-glutaminyl-tRNA(Gln) + L-glutamate + ADP + phosphate + H(+). In terms of biological role, allows the formation of correctly charged Gln-tRNA(Gln) through the transamidation of misacylated Glu-tRNA(Gln) in organisms which lack glutaminyl-tRNA synthetase. The reaction takes place in the presence of glutamine and ATP through an activated gamma-phospho-Glu-tRNA(Gln). This chain is Glutamyl-tRNA(Gln) amidotransferase subunit A, found in Psychrobacter cryohalolentis (strain ATCC BAA-1226 / DSM 17306 / VKM B-2378 / K5).